Consider the following 512-residue polypeptide: Probable malate:quinone oxidoreductase (512 aa).

Belongs to the MQO family. FAD serves as cofactor.

The enzyme catalyses (S)-malate + a quinone = a quinol + oxaloacetate. It participates in carbohydrate metabolism; tricarboxylic acid cycle; oxaloacetate from (S)-malate (quinone route): step 1/1. The protein is Probable malate:quinone oxidoreductase of Rhodococcus erythropolis (strain PR4 / NBRC 100887).